Consider the following 396-residue polypeptide: MARAKFLREKLHVNVGTIGHVDHGKTTLTAALTKIGAERFGGEFKAYDAIDAAPEEKARGITISTAHVEYESAVRHYAHVDCPGHADYVKNMITGAAQMDGAILVCSAADGPMPQTREHILLSRQVGVPHIVVFLNKADMVDDAELLELVEMEVRELLSKYDFPGDDTPIIHGSARLALEGDQSDIGVPAILKLVEALDTFIPDPTRDVDRPFLMPVEDVFSISGRGTVVTGRIERGIIKVGDEIEIVGIRDTQKTTVTGVEMFRKLLDQGQAGDNAGLLLRGTKRDDVERGQVLCKPGSIKPHTEFEAEVYVLSKDEGGRHTPFFKGYRPQFYFRTTDITGACQLPEGVEMVMPGDNVKMVVTLINPVAMDEGLRFAIREGGRTVGAGVVAKIVK.

The 197-residue stretch at 10 to 206 (KLHVNVGTIG…ALDTFIPDPT (197 aa)) folds into the tr-type G domain. Residues 19–26 (GHVDHGKT) form a G1 region. 19–26 (GHVDHGKT) is a GTP binding site. Residue T26 coordinates Mg(2+). The G2 stretch occupies residues 60 to 64 (GITIS). Residues 81-84 (DCPG) form a G3 region. Residues 81-85 (DCPGH) and 136-139 (NKAD) contribute to the GTP site. The interval 136–139 (NKAD) is G4. Residues 174-176 (SAR) are G5.

The protein belongs to the TRAFAC class translation factor GTPase superfamily. Classic translation factor GTPase family. EF-Tu/EF-1A subfamily. As to quaternary structure, monomer.

Its subcellular location is the cytoplasm. It catalyses the reaction GTP + H2O = GDP + phosphate + H(+). Its function is as follows. GTP hydrolase that promotes the GTP-dependent binding of aminoacyl-tRNA to the A-site of ribosomes during protein biosynthesis. In Xanthomonas campestris pv. campestris (strain ATCC 33913 / DSM 3586 / NCPPB 528 / LMG 568 / P 25), this protein is Elongation factor Tu-B.